We begin with the raw amino-acid sequence, 76 residues long: Large ribosomal subunit protein bL31 (76 aa).

It belongs to the bacterial ribosomal protein bL31 family. Type A subfamily. As to quaternary structure, part of the 50S ribosomal subunit.

Its function is as follows. Binds the 23S rRNA. This chain is Large ribosomal subunit protein bL31 (rpmE), found in Pelagibacter ubique (strain HTCC1062).